The following is a 222-amino-acid chain: ATP-dependent dethiobiotin synthetase BioD (222 aa).

Position 12-17 (12-17) interacts with ATP; that stretch reads DAGKTV. Threonine 16 contributes to the Mg(2+) binding site. The active site involves lysine 37. Substrate is bound at residue serine 41. ATP-binding positions include aspartate 54, 116-119, 176-177, 206-208, and glutamate 213; these read EGAG, VQ, and PYL. Residues aspartate 54 and glutamate 116 each contribute to the Mg(2+) site.

It belongs to the dethiobiotin synthetase family. Homodimer. Requires Mg(2+) as cofactor.

The protein resides in the cytoplasm. It carries out the reaction (7R,8S)-7,8-diammoniononanoate + CO2 + ATP = (4R,5S)-dethiobiotin + ADP + phosphate + 3 H(+). It participates in cofactor biosynthesis; biotin biosynthesis; biotin from 7,8-diaminononanoate: step 1/2. Catalyzes a mechanistically unusual reaction, the ATP-dependent insertion of CO2 between the N7 and N8 nitrogen atoms of 7,8-diaminopelargonic acid (DAPA, also called 7,8-diammoniononanoate) to form a ureido ring. The polypeptide is ATP-dependent dethiobiotin synthetase BioD (Idiomarina loihiensis (strain ATCC BAA-735 / DSM 15497 / L2-TR)).